Consider the following 208-residue polypeptide: Methyl-CpG-binding domain protein 3-like 2 (208 aa).

Residues 1 to 89 (MGEPAFTSFP…HLEKPQQLCA (89 aa)) form an interacts with MBD3 region.

Belongs to the MBD3L family. As to quaternary structure, interacts (via N-terminus) with MBD3; the interaction is direct. Interacts with MTA1. Interacts with HDAC1. Interacts with HDAC2. Interacts with RBBP4. Interacts with RBBP7. Detected at low levels in several somatic tissues. Highly expressed in the ovarian teratocarcinoma cell line PA-1.

The protein localises to the nucleus. Functionally, may displace the NuRD complex from chromatin. The chain is Methyl-CpG-binding domain protein 3-like 2 (MBD3L2) from Homo sapiens (Human).